A 546-amino-acid polypeptide reads, in one-letter code: Membrane protein insertase YidC (546 aa).

Residues 6-26 (NLLLIALLFVSFMIWQAWQVD) form a helical membrane-spanning segment. Over residues 30–44 (QPTAQTTQQTTNTAT) the composition is skewed to low complexity. The interval 30 to 55 (QPTAQTTQQTTNTATGDKASQAVPGS) is disordered. 4 consecutive transmembrane segments (helical) span residues 344–364 (KFIH…TFIV), 419–439 (LGGC…YYML), 457–477 (LSAQ…MYFI), and 498–518 (PVIF…YYIV).

Belongs to the OXA1/ALB3/YidC family. Type 1 subfamily. In terms of assembly, interacts with the Sec translocase complex via SecD. Specifically interacts with transmembrane segments of nascent integral membrane proteins during membrane integration.

The protein resides in the cell inner membrane. Its function is as follows. Required for the insertion and/or proper folding and/or complex formation of integral membrane proteins into the membrane. Involved in integration of membrane proteins that insert both dependently and independently of the Sec translocase complex, as well as at least some lipoproteins. Aids folding of multispanning membrane proteins. The protein is Membrane protein insertase YidC of Yersinia pestis.